The sequence spans 490 residues: Betaine aldehyde dehydrogenase (490 aa).

Asp93 contacts K(+). 150 to 152 (GAW) contributes to the NAD(+) binding site. Lys162 (charge relay system) is an active-site residue. Position 176 to 179 (176 to 179 (KPSE)) interacts with NAD(+). Val180 is a binding site for K(+). Residue 230 to 233 (GIAS) participates in NAD(+) binding. Leu246 provides a ligand contact to K(+). The active-site Proton acceptor is Glu252. The NAD(+) site is built by Gly254, Cys286, and Glu387. The active-site Nucleophile is Cys286. Cys286 bears the Cysteine sulfenic acid (-SOH) mark. Residues Lys457 and Gly460 each coordinate K(+). Catalysis depends on Glu464, which acts as the Charge relay system.

It belongs to the aldehyde dehydrogenase family. As to quaternary structure, dimer of dimers. K(+) is required as a cofactor.

The enzyme catalyses betaine aldehyde + NAD(+) + H2O = glycine betaine + NADH + 2 H(+). Its pathway is amine and polyamine biosynthesis; betaine biosynthesis via choline pathway; betaine from betaine aldehyde: step 1/1. Its function is as follows. Involved in the biosynthesis of the osmoprotectant glycine betaine. Catalyzes the irreversible oxidation of betaine aldehyde to the corresponding acid. The sequence is that of Betaine aldehyde dehydrogenase from Yersinia pseudotuberculosis serotype IB (strain PB1/+).